Here is a 233-residue protein sequence, read N- to C-terminus: GSK-3-binding protein FRAT2 (233 aa).

The segment at 1–24 is disordered; sequence MPCRREEEEEAGEEAEGEEEEDDS. Positions 7–24 are enriched in acidic residues; the sequence is EEEEAGEEAEGEEEEDDS. Residues 174–196 are involved in GSK-3 binding; it reads DPHRLLQQLVLSGNLIKEAVRRL. Residues 204–233 are disordered; that stretch reads AATGPASAPGPGGGRSGPDRIALQPSGSLL.

The protein belongs to the GSK-3-binding protein family. As to quaternary structure, binds GSK-3 and prevents GSK-3-dependent phosphorylation.

Functionally, positively regulates the Wnt signaling pathway by stabilizing beta-catenin through the association with GSK-3. The chain is GSK-3-binding protein FRAT2 (FRAT2) from Homo sapiens (Human).